We begin with the raw amino-acid sequence, 190 residues long: CASP-like protein 1E2 (190 aa).

Residues 1–12 show a composition bias toward low complexity; it reads MENEGKNNMNGM. Residues 1–24 are disordered; it reads MENEGKNNMNGMEMEKGKRESRSR. Over 1–28 the chain is Cytoplasmic; sequence MENEGKNNMNGMEMEKGKRESRSRKGVE. Positions 13–24 are enriched in basic and acidic residues; the sequence is EMEKGKRESRSR. The helical transmembrane segment at 29–49 threads the bilayer; it reads LTMRVLALVLTMAAATVLGVA. Residues 50-83 are Extracellular-facing; the sequence is KQTKVVSIKLIPALPPLDITTTAKASYLSAFVYN. The helical transmembrane segment at 84 to 104 threads the bilayer; sequence ISANAIACGYTAISIAILMIS. The Cytoplasmic portion of the chain corresponds to 105–111; sequence RGRRSKK. A helical transmembrane segment spans residues 112–132; sequence LLMAVLLGDLVMVALLFSGTG. The Extracellular portion of the chain corresponds to 133 to 163; that stretch reads AASAIGLMGLQGNKHVMWNKVCGVFGKFCHR. The chain crosses the membrane as a helical span at residues 164–184; the sequence is AAPSLPLTFLAAVVFMFLVVL. Over 185–190 the chain is Cytoplasmic; the sequence is DAIKLP.

This sequence belongs to the Casparian strip membrane proteins (CASP) family. As to quaternary structure, homodimer and heterodimers.

It is found in the cell membrane. The protein is CASP-like protein 1E2 of Arabidopsis lyrata subsp. lyrata (Lyre-leaved rock-cress).